The primary structure comprises 230 residues: Maleylacetoacetate isomerase (230 aa).

The region spanning L7–P95 is the GST N-terminal domain. Residues S17–R22, Q46, V60, Q79–S80, Q123, and N127–R129 each bind glutathione. In terms of domain architecture, GST C-terminal spans N104 to T226.

It belongs to the GST superfamily. Zeta family. Requires glutathione as cofactor.

The protein localises to the cytoplasm. It carries out the reaction 4-maleylacetoacetate = 4-fumarylacetoacetate. It functions in the pathway amino-acid degradation; L-phenylalanine degradation; acetoacetate and fumarate from L-phenylalanine: step 5/6. In Emericella nidulans (strain FGSC A4 / ATCC 38163 / CBS 112.46 / NRRL 194 / M139) (Aspergillus nidulans), this protein is Maleylacetoacetate isomerase (maiA).